Consider the following 681-residue polypeptide: UvrABC system protein C (681 aa).

Residues 1-23 (MNGKKLPDGGILFDETDDEDDDA) form a disordered region. The span at 14–23 (DETDDEDDDA) shows a compositional bias: acidic residues. The GIY-YIG domain occupies 67–145 (NSPGVYRMFN…IKRLRPRFNV (79 aa)). The UVR domain occupies 255 to 290 (QAVKTAIARQMNEASEDLDFERAAIYRDRLAALSHV).

The protein belongs to the UvrC family. Interacts with UvrB in an incision complex.

It is found in the cytoplasm. Its function is as follows. The UvrABC repair system catalyzes the recognition and processing of DNA lesions. UvrC both incises the 5' and 3' sides of the lesion. The N-terminal half is responsible for the 3' incision and the C-terminal half is responsible for the 5' incision. The sequence is that of UvrABC system protein C from Agrobacterium fabrum (strain C58 / ATCC 33970) (Agrobacterium tumefaciens (strain C58)).